Here is a 65-residue protein sequence, read N- to C-terminus: SCOCO-like protein 1 (65 aa).

The stretch at 8 to 44 forms a coiled coil; sequence RSLMEQKAMELQQQLQALLDEIDQNKQESENISRESE.

The protein belongs to the SLO1 family.

This is SCOCO-like protein 1 from Schizosaccharomyces pombe (strain 972 / ATCC 24843) (Fission yeast).